We begin with the raw amino-acid sequence, 488 residues long: Patatin-like protein 7 (488 aa).

The segment at Gln23 to Met49 is disordered. The span at Ala32 to Thr47 shows a compositional bias: polar residues. The 201-residue stretch at Leu101–Ile301 folds into the PNPLA domain. The short motif at Gly105–Gly110 is the GXGXXG element. The active-site Nucleophile is Ser145.

Belongs to the patatin family. Highly expressed in roots and at lower levels in leaves, stems, flowers and siliques.

The protein resides in the cell membrane. Its function is as follows. Possesses non-specific lipolytic acyl hydrolase (LAH) activity. Catalyzes the hydrolysis of the galactolipids monogalactosyldiacylglycerol (MGDG) and digalactosyldiacylglycerol (DGDG), and the phoshpolipids phosphatidylcholine (PC), phosphatidylethanolamine (PE), phosphatidylglycerol (PG), phosphatidic acid (PA), phosphatidylserine (PS). Favors the release of fatty acid at the sn-2 position for PC. Possesses acyl-CoA thioesterase activity. Negatively affects disease resistance to the necrotic fungal pathogen Botrytis cinerea and the avirulent bacteria Pseudomonas syringae by promoting cell death and reducing the efficiency of the hypersensitive response, respectively. However, PLP2 contributes to resistance to cucumber mosaic virus (CMV), an obligate parasite inducing hypersensitive response. May negatively regulate oxylipin production, possibly via participating in membrane repair that includes removal of oxidatively modified lipids. Enzymatic products of PLP2 may influence cellulose content and cell elongation. This chain is Patatin-like protein 7 (PLP7), found in Arabidopsis thaliana (Mouse-ear cress).